A 587-amino-acid polypeptide reads, in one-letter code: Inorganic phosphate transporter 2-1, chloroplastic (587 aa).

Residues methionine 1–tyrosine 71 constitute a chloroplast transit peptide. Positions serine 74–glutamate 106 are disordered. Residues proline 85–glutamate 98 show a composition bias toward polar residues. The next 12 helical transmembrane spans lie at alanine 127–glycine 147, threonine 154–alanine 174, alanine 195–threonine 215, methionine 233–alanine 253, cysteine 265–tryptophan 285, alanine 289–valine 309, alanine 327–leucine 347, isoleucine 352–aspartate 372, leucine 413–phenylalanine 433, isoleucine 465–methionine 485, leucine 523–alanine 543, and alanine 559–phenylalanine 579.

It belongs to the inorganic phosphate transporter (PiT) (TC 2.A.20.2) family. Mostly expressed in young green tissues. Present in both auto- and heterotrophic tissues. Also expressed in root stele.

It localises to the plastid. The protein localises to the chloroplast inner membrane. In terms of biological role, low affinity H(+)/Pi chloroplastic cotransporter. Involved in inorganic phosphate (orthophosphate, Pi) uptake in green parts of plants in Pi-sufficient conditions. Required for Pi retranslocation during Pi deprivation. In Arabidopsis thaliana (Mouse-ear cress), this protein is Inorganic phosphate transporter 2-1, chloroplastic (PHT2-1).